We begin with the raw amino-acid sequence, 364 residues long: Fructose-bisphosphate aldolase C (364 aa).

Y5 is subject to Phosphotyrosine. Residues S36, S39, and S45 each carry the phosphoserine modification. Residue R56 participates in substrate binding. K111 bears the N6-acetyllysine mark. S132 is subject to Phosphoserine. A substrate-binding site is contributed by K147. The Proton acceptor role is filled by E188. The Schiff-base intermediate with dihydroxyacetone-P role is filled by K230.

The protein belongs to the class I fructose-bisphosphate aldolase family. As to quaternary structure, homotetramer. Interacts with ATP6V1E1.

It carries out the reaction beta-D-fructose 1,6-bisphosphate = D-glyceraldehyde 3-phosphate + dihydroxyacetone phosphate. It functions in the pathway carbohydrate degradation; glycolysis; D-glyceraldehyde 3-phosphate and glycerone phosphate from D-glucose: step 4/4. The polypeptide is Fructose-bisphosphate aldolase C (ALDOC) (Pan troglodytes (Chimpanzee)).